Here is a 345-residue protein sequence, read N- to C-terminus: Homeobox protein DBX1 (345 aa).

Disordered stretches follow at residues 55-103 (PRGS…VSPA) and 241-345 (KERE…ITVS). The homeobox DNA-binding region spans 182–241 (GMLRRAVFSDVQRKALEKMFQKQKYISKPDRKKLAAKLGLKDSQVKIWFQNRRMKWRNSK). Residues 300 to 309 (DPRHLRDPRL) are compositionally biased toward basic and acidic residues. A compositionally biased stretch (acidic residues) spans 330–345 (SDSEDDEEGEEEITVS).

Belongs to the H2.0 homeobox family.

The protein resides in the nucleus. Could have a role in patterning the central nervous system during embryogenesis. Has a key role in regulating the distinct phenotypic features that distinguish two major classes of ventral interneurons, V0 and V1 neurons. Regulates the transcription factor profile, neurotransmitter phenotype, intraspinal migratory path and axonal trajectory of V0 neurons, features that differentiate them from an adjacent set of V1 neurons. In Bos taurus (Bovine), this protein is Homeobox protein DBX1 (DBX1).